The following is a 508-amino-acid chain: Photosystem II CP47 reaction center protein (508 aa).

6 helical membrane-spanning segments follow: residues 21–36, 101–115, 140–156, 203–218, 237–252, and 457–472; these read SVHI…WAGS, IVFS…IWHW, GIHL…FGAF, IAAG…FHLS, VLSS…AFVV, and SFAL…HGAR.

This sequence belongs to the PsbB/PsbC family. PsbB subfamily. As to quaternary structure, PSII is composed of 1 copy each of membrane proteins PsbA, PsbB, PsbC, PsbD, PsbE, PsbF, PsbH, PsbI, PsbJ, PsbK, PsbL, PsbM, PsbT, PsbX, PsbY, PsbZ, Psb30/Ycf12, at least 3 peripheral proteins of the oxygen-evolving complex and a large number of cofactors. It forms dimeric complexes. Requires Binds multiple chlorophylls. PSII binds additional chlorophylls, carotenoids and specific lipids. as cofactor.

The protein resides in the plastid. It is found in the chloroplast thylakoid membrane. One of the components of the core complex of photosystem II (PSII). It binds chlorophyll and helps catalyze the primary light-induced photochemical processes of PSII. PSII is a light-driven water:plastoquinone oxidoreductase, using light energy to abstract electrons from H(2)O, generating O(2) and a proton gradient subsequently used for ATP formation. This chain is Photosystem II CP47 reaction center protein, found in Phaseolus vulgaris (Kidney bean).